Reading from the N-terminus, the 477-residue chain is Ribulose bisphosphate carboxylase large chain (477 aa).

Positions 1–2 (MS) are excised as a propeptide. Pro3 is subject to N-acetylproline. N6,N6,N6-trimethyllysine is present on Lys14. Substrate contacts are provided by Asn123 and Thr173. Catalysis depends on Lys175, which acts as the Proton acceptor. Lys177 serves as a coordination point for substrate. Mg(2+) is bound by residues Lys201, Asp203, and Glu204. Position 201 is an N6-carboxylysine (Lys201). Residue His294 is the Proton acceptor of the active site. Residues Arg295, His327, and Ser379 each coordinate substrate.

Belongs to the RuBisCO large chain family. Type I subfamily. Heterohexadecamer of 8 large chains and 8 small chains; disulfide-linked. The disulfide link is formed within the large subunit homodimers. Requires Mg(2+) as cofactor. In terms of processing, the disulfide bond which can form in the large chain dimeric partners within the hexadecamer appears to be associated with oxidative stress and protein turnover.

The protein localises to the plastid. It is found in the chloroplast. It carries out the reaction 2 (2R)-3-phosphoglycerate + 2 H(+) = D-ribulose 1,5-bisphosphate + CO2 + H2O. The enzyme catalyses D-ribulose 1,5-bisphosphate + O2 = 2-phosphoglycolate + (2R)-3-phosphoglycerate + 2 H(+). RuBisCO catalyzes two reactions: the carboxylation of D-ribulose 1,5-bisphosphate, the primary event in carbon dioxide fixation, as well as the oxidative fragmentation of the pentose substrate in the photorespiration process. Both reactions occur simultaneously and in competition at the same active site. This Agrostis stolonifera (Creeping bentgrass) protein is Ribulose bisphosphate carboxylase large chain.